We begin with the raw amino-acid sequence, 313 residues long: Porphobilinogen deaminase (313 aa).

Residue cysteine 242 is modified to S-(dipyrrolylmethanemethyl)cysteine.

It belongs to the HMBS family. In terms of assembly, monomer. Dipyrromethane serves as cofactor.

The catalysed reaction is 4 porphobilinogen + H2O = hydroxymethylbilane + 4 NH4(+). The protein operates within porphyrin-containing compound metabolism; protoporphyrin-IX biosynthesis; coproporphyrinogen-III from 5-aminolevulinate: step 2/4. Its function is as follows. Tetrapolymerization of the monopyrrole PBG into the hydroxymethylbilane pre-uroporphyrinogen in several discrete steps. This Salmonella dublin (strain CT_02021853) protein is Porphobilinogen deaminase.